We begin with the raw amino-acid sequence, 263 residues long: Aquaporin Lacbi1:233199 (263 aa).

Over 1 to 17 (MFTLAHHRHAIRKPMAE) the chain is Cytoplasmic. The chain crosses the membrane as a helical span at residues 18 to 38 (FFGVALLVIFGAGAACQVVLS). The Extracellular segment spans residues 39-44 (TNPNSF). The chain crosses the membrane as a helical span at residues 45 to 65 (LSINFGWAIGIAMGAWISGSI). Over 66 to 88 (SGGHINPAITIAMATYRGFPWRE) the chain is Cytoplasmic. Residues 71–73 (NPA) carry the NPA 1 motif. The helical transmembrane segment at 89-109 (VPSYILAQVLGGVVGAALVYA) threads the bilayer. Residues 110–143 (NYIHAIDVFEGGRHIRTQATASLFATYALPYMTQ) are Extracellular-facing. Residues 144–164 (VSCFFSEFLATAVLAMMVLAL) traverse the membrane as a helical segment. The Cytoplasmic portion of the chain corresponds to 165-174 (TDNRNGAPTN). A helical transmembrane segment spans residues 175 to 195 (GLSPFALFVLFIGLGASLGME). The Extracellular portion of the chain corresponds to 196-227 (TAYALNPARDFGPRLFLAMAGYGKALFNYRSQ). An NPA 2 motif is present at residues 201-203 (NPA). The chain crosses the membrane as a helical span at residues 228–248 (YWLWAPIIAPVLGAQAGGLLY). Residues 249–263 (DTFLYDGDDSPIKWR) are Cytoplasmic-facing.

This sequence belongs to the MIP/aquaporin (TC 1.A.8) family.

The protein resides in the membrane. The catalysed reaction is H2O(in) = H2O(out). Its function is as follows. Probable water channel required to facilitate the transport of water across membranes. This is Aquaporin Lacbi1:233199 from Laccaria bicolor (strain S238N-H82 / ATCC MYA-4686) (Bicoloured deceiver).